The primary structure comprises 90 residues: UPF0297 protein Cthe_0151 (90 aa).

Belongs to the UPF0297 family.

The sequence is that of UPF0297 protein Cthe_0151 from Acetivibrio thermocellus (strain ATCC 27405 / DSM 1237 / JCM 9322 / NBRC 103400 / NCIMB 10682 / NRRL B-4536 / VPI 7372) (Clostridium thermocellum).